The primary structure comprises 392 residues: Pannexin-3 (392 aa).

Residues 1–39 (MSLAHTAAEYMLSDALLPDRRGSRLKGLRLELPLDKMVK) lie on the Cytoplasmic side of the membrane. The helical transmembrane segment at 40–60 (FITVGFPLLLMSLAFAQEFSS) threads the bilayer. Over 61-113 (GSPISCFSPSNFSVRQAAYVDSSCWDSLAHHTQDKAGQYKVKSLWPHKALPYS) the chain is Extracellular. Residue asparagine 71 is glycosylated (N-linked (GlcNAc...) asparagine). The chain crosses the membrane as a helical span at residues 114-134 (LLALAVAMYLPVLLWQYVAVP). Topologically, residues 135–215 (SLSSDLLFII…VATYLLRNAL (81 aa)) are cytoplasmic. Residues 216 to 236 (LLLFTSATYLYLGQFHLDVFF) traverse the membrane as a helical segment. The Extracellular segment spans residues 237-267 (QDEFNCFIKTGLLHDETHVPELITCRLTSLS). Residues 268–288 (VFQIVSVSSAAIYTILVPVII) form a helical membrane-spanning segment. Residues 289–392 (YNLTRLCRWD…LTQHTYDEHA (104 aa)) are Cytoplasmic-facing.

It belongs to the pannexin family. In terms of assembly, homoheptameric. N-glycosylation may play a role in cell surface targeting. In terms of tissue distribution, expressed in skin, cartilage, heart, lung, liver, spleen, thymus and kidney. Not expressed in brain. Expressed in calvarial cells.

It is found in the cell membrane. The protein resides in the endoplasmic reticulum membrane. It catalyses the reaction Ca(2+)(in) = Ca(2+)(out). The enzyme catalyses ATP(in) = ATP(out). In terms of biological role, regulator of osteoblast differentiation by functionning as a Ca(2+) channel in the endoplasmic reticulum which regulates calmodulin (CaM) pathways. Allows ATP release into the extracellular space and activation or purinergic receptors. The chain is Pannexin-3 (Panx3) from Mus musculus (Mouse).